Reading from the N-terminus, the 283-residue chain is Thymidylate synthase (283 aa).

Arg22 contributes to the dUMP binding site. Catalysis depends on Cys160, which acts as the Nucleophile. DUMP-binding positions include 180–183, Asn191, and 221–223; these read RSCD and HIY. Residue Asp183 coordinates (6R)-5,10-methylene-5,6,7,8-tetrahydrofolate. (6R)-5,10-methylene-5,6,7,8-tetrahydrofolate is bound at residue Ser282.

Belongs to the thymidylate synthase family. Bacterial-type ThyA subfamily. As to quaternary structure, homodimer.

It is found in the cytoplasm. It catalyses the reaction dUMP + (6R)-5,10-methylene-5,6,7,8-tetrahydrofolate = 7,8-dihydrofolate + dTMP. The protein operates within pyrimidine metabolism; dTTP biosynthesis. In terms of biological role, catalyzes the reductive methylation of 2'-deoxyuridine-5'-monophosphate (dUMP) to 2'-deoxythymidine-5'-monophosphate (dTMP) while utilizing 5,10-methylenetetrahydrofolate (mTHF) as the methyl donor and reductant in the reaction, yielding dihydrofolate (DHF) as a by-product. This enzymatic reaction provides an intracellular de novo source of dTMP, an essential precursor for DNA biosynthesis. The chain is Thymidylate synthase from Haemophilus influenzae (strain PittEE).